The chain runs to 400 residues: MLNSLDLEGRPQDTRVVVAMSGGVDSSTTAALLKAEGYDVVGITLQLYDHGEAIHRKGACCAGQDIHDARTVAERIGIPHYVLDYESRFRESVIDSFATSYATGETPVPCIECNRSIKFRDLLSTARELGAAVLATGHYVSSRRLPDGSRALVCAADADRDQSYFLFATTREQLDFLRFPLGDMTKPQTRELARSFGLSVADKHDSQDICFVPSGRYSDVVGRLKPNAMEPGDIVDLDGRVLGKHHGIVHFTVGQRRGLGIASHAPLYVLRLEPSTRRVVVGPRAALRMDRILLRDVNWIGDNSLDLAVGDGLEMFVRVRSTRRPQPAWLRAIDGEYQVELIAGEDGVSPGQACVFYDAPEGQARVLGGGFIKSAAPRAANKDARGAAAANRPLAAGVRG.

Residues 19 to 26 (AMSGGVDS) and L45 contribute to the ATP site. C113 serves as the catalytic Nucleophile. C113 and C210 form a disulfide bridge. An ATP-binding site is contributed by G137. The segment at 160 to 162 (RDQ) is interaction with tRNA. C210 acts as the Cysteine persulfide intermediate in catalysis.

The protein belongs to the MnmA/TRMU family.

It localises to the cytoplasm. It carries out the reaction S-sulfanyl-L-cysteinyl-[protein] + uridine(34) in tRNA + AH2 + ATP = 2-thiouridine(34) in tRNA + L-cysteinyl-[protein] + A + AMP + diphosphate + H(+). In terms of biological role, catalyzes the 2-thiolation of uridine at the wobble position (U34) of tRNA, leading to the formation of s(2)U34. The sequence is that of tRNA-specific 2-thiouridylase MnmA from Rhodopseudomonas palustris (strain BisA53).